The following is a 543-amino-acid chain: Cytochrome P450 52A1 (543 aa).

Residues Met1–Lys28 are Lumenal-facing. The chain crosses the membrane as a helical span at residues Trp29 to Thr48. The Cytoplasmic segment spans residues Lys49–Leu543. Residue Cys487 participates in heme binding.

The protein belongs to the cytochrome P450 family. Requires heme as cofactor.

It is found in the endoplasmic reticulum membrane. In terms of biological role, together with an NADPH cytochrome P450 the enzyme system catalyzes the terminal hydroxylation as the first step in the assimilation of alkanes and fatty acids. This is Cytochrome P450 52A1 (CYP52A1) from Candida tropicalis (Yeast).